The primary structure comprises 640 residues: 1-deoxy-D-xylulose-5-phosphate synthase (640 aa).

Thiamine diphosphate contacts are provided by residues His-77 and 118-120 (AHA). Asp-149 contributes to the Mg(2+) binding site. Thiamine diphosphate-binding positions include 150 to 151 (GS), Asn-178, Tyr-287, and Glu-369. Position 178 (Asn-178) interacts with Mg(2+).

The protein belongs to the transketolase family. DXPS subfamily. In terms of assembly, homodimer. The cofactor is Mg(2+). Requires thiamine diphosphate as cofactor.

The enzyme catalyses D-glyceraldehyde 3-phosphate + pyruvate + H(+) = 1-deoxy-D-xylulose 5-phosphate + CO2. Its pathway is metabolic intermediate biosynthesis; 1-deoxy-D-xylulose 5-phosphate biosynthesis; 1-deoxy-D-xylulose 5-phosphate from D-glyceraldehyde 3-phosphate and pyruvate: step 1/1. Its function is as follows. Catalyzes the acyloin condensation reaction between C atoms 2 and 3 of pyruvate and glyceraldehyde 3-phosphate to yield 1-deoxy-D-xylulose-5-phosphate (DXP). The polypeptide is 1-deoxy-D-xylulose-5-phosphate synthase (Caulobacter vibrioides (strain NA1000 / CB15N) (Caulobacter crescentus)).